The chain runs to 161 residues: 2-C-methyl-D-erythritol 2,4-cyclodiphosphate synthase (161 aa).

2 residues coordinate a divalent metal cation: Asp-9 and His-11. 4-CDP-2-C-methyl-D-erythritol 2-phosphate is bound by residues 9–11 and 37–38; these read DFH and HS. Position 45 (His-45) interacts with a divalent metal cation. 4-CDP-2-C-methyl-D-erythritol 2-phosphate-binding positions include 59–61, 64–68, 135–138, and Arg-145; these read DIG, FPDTD, and TTTE.

It belongs to the IspF family. Homotrimer. It depends on a divalent metal cation as a cofactor.

The enzyme catalyses 4-CDP-2-C-methyl-D-erythritol 2-phosphate = 2-C-methyl-D-erythritol 2,4-cyclic diphosphate + CMP. Its pathway is isoprenoid biosynthesis; isopentenyl diphosphate biosynthesis via DXP pathway; isopentenyl diphosphate from 1-deoxy-D-xylulose 5-phosphate: step 4/6. In terms of biological role, involved in the biosynthesis of isopentenyl diphosphate (IPP) and dimethylallyl diphosphate (DMAPP), two major building blocks of isoprenoid compounds. Catalyzes the conversion of 4-diphosphocytidyl-2-C-methyl-D-erythritol 2-phosphate (CDP-ME2P) to 2-C-methyl-D-erythritol 2,4-cyclodiphosphate (ME-CPP) with a corresponding release of cytidine 5-monophosphate (CMP). This chain is 2-C-methyl-D-erythritol 2,4-cyclodiphosphate synthase, found in Leptospira interrogans serogroup Icterohaemorrhagiae serovar Lai (strain 56601).